A 431-amino-acid polypeptide reads, in one-letter code: Enolase (431 aa).

Residue Gln-166 coordinates (2R)-2-phosphoglycerate. Glu-208 (proton donor) is an active-site residue. Asp-245, Glu-288, and Asp-315 together coordinate Mg(2+). (2R)-2-phosphoglycerate-binding residues include Lys-340, Arg-369, Ser-370, and Lys-391. The active-site Proton acceptor is the Lys-340.

The protein belongs to the enolase family. Requires Mg(2+) as cofactor.

Its subcellular location is the cytoplasm. It is found in the secreted. It localises to the cell surface. It catalyses the reaction (2R)-2-phosphoglycerate = phosphoenolpyruvate + H2O. It functions in the pathway carbohydrate degradation; glycolysis; pyruvate from D-glyceraldehyde 3-phosphate: step 4/5. Functionally, catalyzes the reversible conversion of 2-phosphoglycerate (2-PG) into phosphoenolpyruvate (PEP). It is essential for the degradation of carbohydrates via glycolysis. This is Enolase from Clostridium perfringens (strain 13 / Type A).